We begin with the raw amino-acid sequence, 796 residues long: ATP-dependent DNA helicase PIF6 (796 aa).

The disordered stretch occupies residues 197 to 230; the sequence is RPTGLPSAHSGGKLPKHMGGDELNPQLEGSTTPG. 255-262 is a binding site for ATP; sequence GSAGTGKT. A DNA-binding region spans residues 636 to 655; that stretch reads QAYVALSRVRSREDLMLTAF. 2 disordered regions span residues 692-719 and 762-796; these read KGKT…PEEH and TSSA…VDDD.

It belongs to the helicase family. PIF1 subfamily. Monomer. It depends on Mg(2+) as a cofactor.

It is found in the nucleus. It carries out the reaction Couples ATP hydrolysis with the unwinding of duplex DNA at the replication fork by translocating in the 5'-3' direction. This creates two antiparallel DNA single strands (ssDNA). The leading ssDNA polymer is the template for DNA polymerase III holoenzyme which synthesizes a continuous strand.. The catalysed reaction is ATP + H2O = ADP + phosphate + H(+). DNA-dependent ATPase and 5'-3' DNA helicase required for the maintenance of genome stability. This is ATP-dependent DNA helicase PIF6 from Trypanosoma brucei brucei (strain 927/4 GUTat10.1).